Reading from the N-terminus, the 378-residue chain is Cytochrome b (378 aa).

Helical transmembrane passes span 35 to 55 (FGSL…FLAM), 79 to 101 (WIIR…CHIG), 114 to 134 (TWIM…LGYV), and 180 to 200 (FFSL…LHIF). Residues histidine 85 and histidine 99 each coordinate heme b. Heme b contacts are provided by histidine 184 and histidine 198. Histidine 203 serves as a coordination point for a ubiquinone. Helical transmembrane passes span 226 to 246 (YSAK…FISF), 290 to 310 (LGGV…PLTH), 326 to 346 (FFWL…QPVC), and 350 to 370 (VMCS…CGPL).

This sequence belongs to the cytochrome b family. In terms of assembly, the main subunits of complex b-c1 are: cytochrome b, cytochrome c1 and the Rieske protein. Heme b is required as a cofactor.

The protein localises to the mitochondrion inner membrane. Its function is as follows. Component of the ubiquinol-cytochrome c reductase complex (complex III or cytochrome b-c1 complex) that is part of the mitochondrial respiratory chain. The b-c1 complex mediates electron transfer from ubiquinol to cytochrome c. Contributes to the generation of a proton gradient across the mitochondrial membrane that is then used for ATP synthesis. This is Cytochrome b (mt:Cyt-b) from Paraspadella gotoi (Arrow worm).